The following is a 92-amino-acid chain: Nodulation protein F (92 aa).

Residues 4–88 (QLTLEIISAI…DVVEAVRGLL (85 aa)) enclose the Carrier domain. Residue Ser45 is modified to O-(pantetheine 4'-phosphoryl)serine.

4'-phosphopantetheine is transferred from CoA to a specific serine of apo-NodF.

Functionally, proposed to synthesize nod factor fatty acyl chain. Involved in trans-2,trans-4,trans-6,cis-11-octadecatetraenoic acid biosynthesis. In Rhizobium leguminosarum bv. viciae, this protein is Nodulation protein F (nodF).